The sequence spans 99 residues: Aspartyl/glutamyl-tRNA(Asn/Gln) amidotransferase subunit C (99 aa).

Belongs to the GatC family. As to quaternary structure, heterotrimer of A, B and C subunits.

The catalysed reaction is L-glutamyl-tRNA(Gln) + L-glutamine + ATP + H2O = L-glutaminyl-tRNA(Gln) + L-glutamate + ADP + phosphate + H(+). It catalyses the reaction L-aspartyl-tRNA(Asn) + L-glutamine + ATP + H2O = L-asparaginyl-tRNA(Asn) + L-glutamate + ADP + phosphate + 2 H(+). Allows the formation of correctly charged Asn-tRNA(Asn) or Gln-tRNA(Gln) through the transamidation of misacylated Asp-tRNA(Asn) or Glu-tRNA(Gln) in organisms which lack either or both of asparaginyl-tRNA or glutaminyl-tRNA synthetases. The reaction takes place in the presence of glutamine and ATP through an activated phospho-Asp-tRNA(Asn) or phospho-Glu-tRNA(Gln). The protein is Aspartyl/glutamyl-tRNA(Asn/Gln) amidotransferase subunit C of Mycobacterium marinum (strain ATCC BAA-535 / M).